The sequence spans 404 residues: Pleckstrin homology domain-containing family A member 1 (404 aa).

2 consecutive PH domains span residues 7-112 (QNRI…KAIK) and 191-289 (AVIK…GAIV). Disordered regions lie at residues 291 to 332 (QRGP…RSNS) and 355 to 404 (NFKV…VSDV). The segment covering 316–332 (TNAATATSHSTASRSNS) has biased composition (low complexity). Phosphoserine occurs at positions 332 and 362.

As to quaternary structure, interacts with MPDZ and PTPN13. As to expression, highly expressed in skeletal muscle, thymus, pancreas, placenta and lung. Detected at low levels in brain, heart, peripheral blood leukocytes, testis, ovary, spinal cord, thyroid, kidney, liver, small intestine and colon.

The protein localises to the cytoplasm. It localises to the cell membrane. It is found in the nucleus. Binds specifically to phosphatidylinositol 3,4-diphosphate (PtdIns3,4P2), but not to other phosphoinositides. May recruit other proteins to the plasma membrane. This chain is Pleckstrin homology domain-containing family A member 1 (PLEKHA1), found in Homo sapiens (Human).